Here is a 156-residue protein sequence, read N- to C-terminus: Glycine cleavage system H protein 2, mitochondrial (156 aa).

A mitochondrion-targeting transit peptide spans 1–23 (MACRLFWASRVASHLRISVAQRG). One can recognise a Lipoyl-binding domain in the interval 47 to 129 (KATFGITDHA…YEQGWIIKVE (83 aa)). Lys-88 is modified (N6-lipoyllysine). Position 131 is a phosphoserine (Ser-131).

It belongs to the GcvH family. In terms of assembly, the glycine cleavage system is composed of four proteins: P, T, L and H. (R)-lipoate serves as cofactor.

Its subcellular location is the mitochondrion. In terms of biological role, the glycine decarboxylase (GDC) or glycine cleavage system catalyzes the degradation of glycine. The H protein shuttles the methylamine group of glycine from the P protein to the T protein. In Arabidopsis thaliana (Mouse-ear cress), this protein is Glycine cleavage system H protein 2, mitochondrial (GDH2).